The chain runs to 120 residues: Large ribosomal subunit protein bL12 (120 aa).

The protein belongs to the bacterial ribosomal protein bL12 family. Homodimer. Part of the ribosomal stalk of the 50S ribosomal subunit. Forms a multimeric L10(L12)X complex, where L10 forms an elongated spine to which 2 to 4 L12 dimers bind in a sequential fashion. Binds GTP-bound translation factors.

Forms part of the ribosomal stalk which helps the ribosome interact with GTP-bound translation factors. Is thus essential for accurate translation. The sequence is that of Large ribosomal subunit protein bL12 from Brevibacillus brevis (strain 47 / JCM 6285 / NBRC 100599).